The primary structure comprises 388 residues: Flap endonuclease 1 (388 aa).

The interval 1–105 is N-domain; that stretch reads MGIKNLTSLI…GELAKRYARR (105 aa). Mg(2+) is bound at residue D34. R71 contributes to the DNA binding site. Residues D87, E159, E161, D180, and D182 each coordinate Mg(2+). The tract at residues 123–254 is I-domain; the sequence is DVQKFQKRTI…KKSFDMITKH (132 aa). Position 159 (E159) interacts with DNA. The DNA site is built by G232 and D234. Mg(2+) is bound at residue D234. Residues 338–346 form an interaction with PCNA region; sequence VQTRIDTFF. The segment at 349–388 is disordered; sequence IKRPRDEDAGSAKKKQKTVAKPGAAGSKKKPAAKKAAGKK. Basic residues predominate over residues 375-388; that stretch reads SKKKPAAKKAAGKK.

This sequence belongs to the XPG/RAD2 endonuclease family. FEN1 subfamily. Interacts with PCNA. Three molecules of repG bind to one PCNA trimer with each molecule binding to one PCNA monomer. PCNA stimulates the nuclease activity without altering cleavage specificity. Mg(2+) is required as a cofactor. In terms of processing, phosphorylated. Phosphorylation upon DNA damage induces relocalization to the nuclear plasma.

The protein resides in the nucleus. It is found in the nucleolus. Its subcellular location is the nucleoplasm. It localises to the mitochondrion. Functionally, structure-specific nuclease with 5'-flap endonuclease and 5'-3' exonuclease activities involved in DNA replication and repair. During DNA replication, cleaves the 5'-overhanging flap structure that is generated by displacement synthesis when DNA polymerase encounters the 5'-end of a downstream Okazaki fragment. It enters the flap from the 5'-end and then tracks to cleave the flap base, leaving a nick for ligation. Also involved in the long patch base excision repair (LP-BER) pathway, by cleaving within the apurinic/apyrimidinic (AP) site-terminated flap. Acts as a genome stabilization factor that prevents flaps from equilibrating into structures that lead to duplications and deletions. Also possesses 5'-3' exonuclease activity on nicked or gapped double-stranded DNA, and exhibits RNase H activity. Also involved in replication and repair of rDNA and in repairing mitochondrial DNA. The polypeptide is Flap endonuclease 1 (Heterostelium pallidum (strain ATCC 26659 / Pp 5 / PN500) (Cellular slime mold)).